Here is a 303-residue protein sequence, read N- to C-terminus: Acetylglutamate kinase (303 aa).

Substrate is bound by residues 75 to 76, R97, and N194; that span reads GG.

The protein belongs to the acetylglutamate kinase family. ArgB subfamily.

Its subcellular location is the cytoplasm. The catalysed reaction is N-acetyl-L-glutamate + ATP = N-acetyl-L-glutamyl 5-phosphate + ADP. It participates in amino-acid biosynthesis; L-arginine biosynthesis; N(2)-acetyl-L-ornithine from L-glutamate: step 2/4. Catalyzes the ATP-dependent phosphorylation of N-acetyl-L-glutamate. The sequence is that of Acetylglutamate kinase from Gloeobacter violaceus (strain ATCC 29082 / PCC 7421).